The primary structure comprises 223 residues: uncharacterized protein (223 aa).

This is an uncharacterized protein from Aquifex aeolicus (strain VF5).